The sequence spans 73 residues: Mauriporin (73 aa).

The signal sequence occupies residues 1 to 22 (MNKKTLLVIFFITMLIVDEVNS).

This sequence belongs to the non-disulfide-bridged peptide (NDBP) superfamily. Long chain multifunctional peptide (group 2) family. As to expression, expressed by the venom gland.

The protein resides in the secreted. It localises to the target cell membrane. Amphipathic peptide that displays potent antimicrobial activities against a range of Gram-positive and Gram-negative planktonic bacteria with MIC values in the range 5 uM to 10 uM. In more details, it is active on Listeria ivanovii (MIC=5 uM), Staphylococcus epidermidis (MIC=10 uM), Salmonella enterica (MIC=5 uM), Pseudomonas aeruginosa (ATCC 27853) (MIC=5 uM), Acinetobacter baumannii (MIC=5 uM), Klebsiella pneumoniae (MIC=5 uM), Escherichia coli (MIC=7.5 uM), Salmonella typhimurium (MIC=7.5 uM), Pseudomonas aeruginosa (ATCC 9027) (MIC=10 uM). Is also able to prevent P.aeruginosa biofilm formation while showing weak hemolytic activity towards human erythrocytes. Probably induces bacterial cell death through membrane permeabilization. Moreover, shows DNA-binding activities. Also exerts potent selective cytotoxic and antiproliferative activity against three different prostate cancer cell lines (IC(50)=4.4-7.8 uM), compared to non-tumorigenic cell lines (IC(50)=59.7 uM in Vero and 62.5 uM in HUVEC cells). This peptide possibly exerts its cytotoxic activity through a necrotic mode of cell death. Only shows diminished hemolytic activity against sheep erythrocytes. Does not induce cell death through apoptosis and consequently is not acting upon an intracellular target. In Androctonus mauritanicus (Fat-tailed scorpion), this protein is Mauriporin.